The primary structure comprises 155 residues: MSRRGTTEEKTAKSDPIYRNRLVNMLVNRILKHGKKSLAYQIIYRALKKIQQKTEKNPLSVLRQAIRGVTPDIAVKARRVGGSTHQVPIEIGSAQGKALAVRWLLGASRKRPGRNMAFKLSSELVDAAKGSGDAIRKKEETHRMAEANRAFAHFR.

It belongs to the universal ribosomal protein uS7 family. Part of the 30S ribosomal subunit.

The protein resides in the plastid. It is found in the chloroplast. Functionally, one of the primary rRNA binding proteins, it binds directly to 16S rRNA where it nucleates assembly of the head domain of the 30S subunit. In Citrus sinensis (Sweet orange), this protein is Small ribosomal subunit protein uS7cz/uS7cy (rps7-A).